The chain runs to 554 residues: Hydroxylamine reductase (554 aa).

[2Fe-2S] cluster is bound by residues Cys3, Cys6, Cys18, and Cys25. Hybrid [4Fe-2O-2S] cluster is bound by residues His252, Glu276, Cys320, Cys408, Cys436, Cys461, Glu495, and Lys497. Position 408 is a cysteine persulfide (Cys408).

This sequence belongs to the HCP family. Requires [2Fe-2S] cluster as cofactor. Hybrid [4Fe-2O-2S] cluster serves as cofactor.

It is found in the cytoplasm. It carries out the reaction A + NH4(+) + H2O = hydroxylamine + AH2 + H(+). Functionally, catalyzes the reduction of hydroxylamine to form NH(3) and H(2)O. This chain is Hydroxylamine reductase, found in Shewanella baltica (strain OS195).